The sequence spans 543 residues: Membrane protein insertase YidC (543 aa).

Residues 7-27 form a helical membrane-spanning segment; it reads FLLIGLAMVSFLLWQQWQVDY. A disordered region spans residues 30–61; the sequence is QPAQPVESQQTTGSDAPNSNGDVPIATPTNKS. Polar residues predominate over residues 35–61; it reads VESQQTTGSDAPNSNGDVPIATPTNKS. 4 helical membrane passes run 341–361, 421–441, 451–471, and 499–519; these read FAFL…IILI, GGCF…WVLL, FIFW…PILT, and PVAM…YWLI.

It belongs to the OXA1/ALB3/YidC family. Type 1 subfamily. Interacts with the Sec translocase complex via SecD. Specifically interacts with transmembrane segments of nascent integral membrane proteins during membrane integration.

The protein localises to the cell inner membrane. Functionally, required for the insertion and/or proper folding and/or complex formation of integral membrane proteins into the membrane. Involved in integration of membrane proteins that insert both dependently and independently of the Sec translocase complex, as well as at least some lipoproteins. Aids folding of multispanning membrane proteins. The sequence is that of Membrane protein insertase YidC from Pseudoalteromonas atlantica (strain T6c / ATCC BAA-1087).